The sequence spans 320 residues: Cytosolic Fe-S cluster assembly factor NUBP1 (320 aa).

The residue at position 1 (M1) is an N-acetylmethionine. Residues C8, C22, C25, and C31 each coordinate [4Fe-4S] cluster. 62 to 69 (GKGGVGKS) is a binding site for ATP. The [4Fe-4S] cluster site is built by C235 and C238. At S319 the chain carries Phosphoserine.

It belongs to the Mrp/NBP35 ATP-binding proteins family. NUBP1/NBP35 subfamily. As to quaternary structure, heterotetramer of 2 NUBP1 and 2 NUBP2 chains. Interacts with KIFC1. Interacts with NUBP2. Interacts with the BBS/CCT complex subunit CCT1. The cofactor is [4Fe-4S] cluster.

The protein resides in the cytoplasm. The protein localises to the nucleus. It localises to the cell projection. Its subcellular location is the cytoskeleton. It is found in the cilium axoneme. The protein resides in the cilium basal body. The protein localises to the microtubule organizing center. It localises to the centrosome. Its subcellular location is the centriole. Functionally, component of the cytosolic iron-sulfur (Fe/S) protein assembly (CIA) machinery. Required for maturation of extramitochondrial Fe-S proteins. The NUBP1-NUBP2 heterotetramer forms a Fe-S scaffold complex, mediating the de novo assembly of an Fe-S cluster and its transfer to target apoproteins. Implicated in the regulation of centrosome duplication. Negatively regulates cilium formation and structure. The sequence is that of Cytosolic Fe-S cluster assembly factor NUBP1 from Homo sapiens (Human).